The chain runs to 273 residues: MSLILAIYGKGGIGKSTTSANLSAAMALKGAKVLQIGCDPKHDSTFPLTGHLQPTVIDVLDSVNFHLEDVSKEDVIRTGFAGVDTLESGGPPAGSGCGGYVVGETVKLLKEFGLYDKYDVIVFDVLGDVVCGGFSAPLNYADYGLIIACNDFDSIFAANRLCLAISQKSQRHKVKLAGIIANRVDYEYGGGTNLLDQFAEKVGTKVIGRVPYHDLIRRSRLAGKTLFEMEGPGKEECTRPFEEMAEYLLAQPQATVPQPYHDRAIFEAIGGWR.

ATP is bound by residues 12 to 17 (GIGKST) and Lys41. Position 16 (Ser16) interacts with Mg(2+). Positions 97 and 131 each coordinate [4Fe-4S] cluster. 182-183 (NR) serves as a coordination point for ATP.

This sequence belongs to the NifH/BchL/ChlL family. Homodimer. Protochlorophyllide reductase is composed of three subunits; BchL, BchN and BchB. Requires [4Fe-4S] cluster as cofactor.

It carries out the reaction chlorophyllide a + oxidized 2[4Fe-4S]-[ferredoxin] + 2 ADP + 2 phosphate = protochlorophyllide a + reduced 2[4Fe-4S]-[ferredoxin] + 2 ATP + 2 H2O. Its pathway is porphyrin-containing compound metabolism; bacteriochlorophyll biosynthesis (light-independent). Component of the dark-operative protochlorophyllide reductase (DPOR) that uses Mg-ATP and reduced ferredoxin to reduce ring D of protochlorophyllide (Pchlide) to form chlorophyllide a (Chlide). This reaction is light-independent. The L component serves as a unique electron donor to the NB-component of the complex, and binds Mg-ATP. The sequence is that of Light-independent protochlorophyllide reductase iron-sulfur ATP-binding protein from Chloroflexus aurantiacus (strain ATCC 29364 / DSM 637 / Y-400-fl).